The sequence spans 502 residues: ATP synthase subunit alpha (502 aa).

Residue 170-177 (GDRKTGKT) participates in ATP binding.

This sequence belongs to the ATPase alpha/beta chains family. As to quaternary structure, F-type ATPases have 2 components, CF(1) - the catalytic core - and CF(0) - the membrane proton channel. CF(1) has five subunits: alpha(3), beta(3), gamma(1), delta(1), epsilon(1). CF(0) has four main subunits: a, b, b' and c.

The protein localises to the cellular thylakoid membrane. The catalysed reaction is ATP + H2O + 4 H(+)(in) = ADP + phosphate + 5 H(+)(out). Functionally, produces ATP from ADP in the presence of a proton gradient across the membrane. The alpha chain is a regulatory subunit. The sequence is that of ATP synthase subunit alpha from Microcystis aeruginosa (strain NIES-843 / IAM M-2473).